The primary structure comprises 186 residues: UPF0398 protein LCA_0919 (186 aa).

The protein belongs to the UPF0398 family.

The sequence is that of UPF0398 protein LCA_0919 from Latilactobacillus sakei subsp. sakei (strain 23K) (Lactobacillus sakei subsp. sakei).